The chain runs to 379 residues: Alcohol dehydrogenase 1 (379 aa).

Positions 47, 49, 69, 99, 102, 105, 113, and 177 each coordinate Zn(2+). Positions 49 and 69 each coordinate an alcohol. T49 contacts NAD(+). NAD(+)-binding positions include 202–207, D226, R231, T272, V295, 295–297, F322, and R372; these read GLGAVG and VGV.

Belongs to the zinc-containing alcohol dehydrogenase family. In terms of assembly, homodimer. The cofactor is Zn(2+).

The protein resides in the cytoplasm. The enzyme catalyses a primary alcohol + NAD(+) = an aldehyde + NADH + H(+). The catalysed reaction is a secondary alcohol + NAD(+) = a ketone + NADH + H(+). The chain is Alcohol dehydrogenase 1 (ADH1) from Oryza sativa subsp. indica (Rice).